A 158-amino-acid chain; its full sequence is Cytochrome c2 (158 aa).

Pyrrolidone carboxylic acid is present on glutamine 1. Cysteine 18, cysteine 21, histidine 22, and methionine 102 together coordinate heme c. Positions 129–158 (AEAAPAADAAAPAAADAAAPAEPAAEGAAT) are disordered.

This sequence belongs to the cytochrome c family. Binds 1 heme c group covalently per subunit.

The protein resides in the periplasm. Functionally, cytochrome c2 is found mainly in purple, non-sulfur, photosynthetic bacteria where it functions as the electron donor to the oxidized bacteriochlorophyll in the photophosphorylation pathway. However, it may also have a role in the respiratory chain and is found in some non-photosynthetic bacteria. In Fuscovulum blasticum (Rhodobacter blasticus), this protein is Cytochrome c2.